The chain runs to 530 residues: Seeligeriolysin (530 aa).

An N-terminal signal peptide occupies residues 1–25 (MKIFGLVIMSLLFVSLPITQQPEAR). Residues 36–55 (TISPAETPESPPATPKTPVE) are disordered. A run of 4 beta stranded transmembrane segments spans residues 215 to 228 (ESQL…AFKA), 235 to 244 (VNFEAISDGK), 313 to 322 (SNKVKTAFEA), and 330 to 342 (KGDV…IKNS). Residues 484 to 494 (ECTGLFWEWWR) carry the Conserved undecapeptide motif. Positions 516-517 (TL) match the Cholesterol binding motif.

The protein belongs to the cholesterol-dependent cytolysin family. In terms of assembly, homooligomeric pore complex of 35 to 50 subunits; when inserted in the host membrane.

The protein resides in the secreted. It localises to the host cell membrane. Functionally, a cholesterol-dependent toxin that causes cytolysis by forming pores in cholesterol containing host membranes. L.seeligeri is non-pathogenic, perhaps in part because this protein is about 25% as toxic as listeriolysin O. Mutating a single residue in the undecapeptide increases toxicity 2-fold. After binding to target membranes, the protein undergoes a major conformation change, leading to its insertion in the host membrane and formation of an oligomeric pore complex. Cholesterol is required for binding to host membranes, membrane insertion and pore formation; cholesterol binding is mediated by a Thr-Leu pair in the C-terminus. Can be reversibly inactivated by oxidation. The polypeptide is Seeligeriolysin (Listeria seeligeri).